The primary structure comprises 353 residues: MFWDFKHRIEQSVTNFRETTYEAFSRCKLFLKTLPKTSIFFLTVIILECLLIICFEGYCIGQFRTVELLKNLGIDSLPISLTLFIFACFFILYLCVEALSSKNIIEIIGLLCIHVALFIYSIVQISELAEIQKVFLSKTQSSLNPITLILNRHEAGNEGIYFILEVPKRIKPFLIALPVILGVASVMLGFLAHGMNKAYGWVIYKKIGPELRMRRRYLVYKIYVTLLKIDIYFFLGVTVQYVMVLPEDAVVEFVLTILVLPLTVLILTLSFNSVSSENMFLMMTVQFFYVCGIPYILFKIIRMYTSTQKEYYASSKQMITTFSVITLLLLLFTIAIGFACSHNFKKGLKEYCM.

A run of 8 helical transmembrane segments spans residues Ile39–Cys59, Ser76–Val96, Asn103–Val123, Pro172–Ala192, Leu226–Pro246, Ala249–Leu269, Leu281–Ile301, and Met318–Phe338.

Belongs to the UPF0658 family.

It is found in the golgi apparatus membrane. The polypeptide is UPF0658 Golgi apparatus membrane protein C23H3.04 (Schizosaccharomyces pombe (strain 972 / ATCC 24843) (Fission yeast)).